A 287-amino-acid polypeptide reads, in one-letter code: 4-diphosphocytidyl-2-C-methyl-D-erythritol kinase (287 aa).

Lys-22 is a catalytic residue. Residue 102–112 (PAAAGIGGGSS) participates in ATP binding. The active site involves Asp-139.

This sequence belongs to the GHMP kinase family. IspE subfamily.

It carries out the reaction 4-CDP-2-C-methyl-D-erythritol + ATP = 4-CDP-2-C-methyl-D-erythritol 2-phosphate + ADP + H(+). The protein operates within isoprenoid biosynthesis; isopentenyl diphosphate biosynthesis via DXP pathway; isopentenyl diphosphate from 1-deoxy-D-xylulose 5-phosphate: step 3/6. Catalyzes the phosphorylation of the position 2 hydroxy group of 4-diphosphocytidyl-2C-methyl-D-erythritol. The sequence is that of 4-diphosphocytidyl-2-C-methyl-D-erythritol kinase from Dinoroseobacter shibae (strain DSM 16493 / NCIMB 14021 / DFL 12).